Here is a 305-residue protein sequence, read N- to C-terminus: Probable aspartoacylase (305 aa).

His-13 and Glu-16 together coordinate Zn(2+). Residues Arg-55 and 62–63 (NR) contribute to the substrate site. His-105 contacts Zn(2+). The substrate site is built by Glu-163 and Tyr-273.

The protein belongs to the AspA/AstE family. Aspartoacylase subfamily. Zn(2+) is required as a cofactor.

The enzyme catalyses an N-acyl-L-aspartate + H2O = a carboxylate + L-aspartate. This Prochlorococcus marinus (strain NATL2A) protein is Probable aspartoacylase.